The chain runs to 192 residues: Interleukin-18 (192 aa).

Residues 1 to 35 constitute a propeptide that is removed on maturation; it reads MAAEPVEDNCISFVEMKFINNTLYFVAENGDLESD.

Belongs to the IL-1 family. In terms of assembly, forms a ternary complex with ligand-binding receptor subunit IL18R1 and signaling receptor subunit IL18RAP at the plasma membrane. Mature IL18 first binds to IL18R1 forming a low affinity binary complex, which then interacts with IL18RAP to form a high affinity ternary complex that signals inside the cell. Interacts with cargo receptor TMED10; the interaction mediates the translocation from the cytoplasm into the ERGIC (endoplasmic reticulum-Golgi intermediate compartment) and thereby secretion. Post-translationally, the pro-IL-18 precursor is processed by CASP1, CASP4 or CASP5 to yield its mature, active form. The pro-IL-18 precursor features autoinhibitory interactions between the propeptide and the post-cleavage-site region, preventing recognition by the IL18R1 receptor. Processing by CASP1, CASP4 or CASP5 induces conformational changes to generate critical receptor-binding sites. The mature form is then secreted and released in the extracellular milieu by passing through the gasdermin-D (GSDMD) pore. In contrast, cleavage by CASP3 inactivates IL18.

It is found in the cytoplasm. The protein resides in the cytosol. Its subcellular location is the secreted. In terms of biological role, pro-inflammatory cytokine primarily involved in epithelial barrier repair, polarized T-helper 1 (Th1) cell and natural killer (NK) cell immune responses. Upon binding to IL18R1 and IL18RAP, forms a signaling ternary complex which activates NF-kappa-B, triggering synthesis of inflammatory mediators. Synergizes with IL12/interleukin-12 to induce IFNG synthesis from T-helper 1 (Th1) cells and natural killer (NK) cells. Involved in transduction of inflammation downstream of pyroptosis: its mature form is specifically released in the extracellular milieu by passing through the gasdermin-D (GSDMD) pore. This is Interleukin-18 (IL18) from Capra hircus (Goat).